A 291-amino-acid polypeptide reads, in one-letter code: Protease HtpX (291 aa).

Transmembrane regions (helical) follow at residues 4–24 and 37–57; these read IVIF…LLTC and IISG…SKFI. Residue H139 participates in Zn(2+) binding. The active site involves E140. H143 is a binding site for Zn(2+). The next 2 helical transmembrane spans lie at 147-167 and 195-215; these read GDMV…IFIS and IVST…VLWF. E220 is a Zn(2+) binding site.

The protein belongs to the peptidase M48B family. Zn(2+) is required as a cofactor.

It is found in the cell membrane. This chain is Protease HtpX, found in Baumannia cicadellinicola subsp. Homalodisca coagulata.